The chain runs to 517 residues: Alpha,alpha-trehalose-phosphate synthase [UDP-forming] 1 (517 aa).

Residues tyrosine 98 and aspartate 152 each contribute to the D-glucose 6-phosphate site. Residues arginine 288 and lysine 293 each contribute to the UDP site. UDP-alpha-D-glucose contacts are provided by arginine 288 and lysine 293. Residue arginine 326 coordinates D-glucose 6-phosphate. 387–395 is a UDP-alpha-D-glucose binding site; it reads DGMNLVAYE. 391–395 contributes to the UDP binding site; sequence LVAYE. Positions 486-517 are disordered; it reads FHAKKASFSDNNSENGEPSNGVETPAQEQVAQ. The segment covering 493–517 has biased composition (polar residues); the sequence is FSDNNSENGEPSNGVETPAQEQVAQ.

The protein belongs to the glycosyltransferase 20 family.

It carries out the reaction D-glucose 6-phosphate + UDP-alpha-D-glucose = alpha,alpha-trehalose 6-phosphate + UDP + H(+). It participates in carbohydrate biosynthesis. Synthase catalytic subunit of the trehalose synthase complex that catalyzes the production of trehalose from glucose-6-phosphate and UDP-alpha-D-glucose in a two step process. This is Alpha,alpha-trehalose-phosphate synthase [UDP-forming] 1 from Aspergillus niger.